We begin with the raw amino-acid sequence, 134 residues long: Large ribosomal subunit protein bL20 (134 aa).

It belongs to the bacterial ribosomal protein bL20 family.

In terms of biological role, binds directly to 23S ribosomal RNA and is necessary for the in vitro assembly process of the 50S ribosomal subunit. It is not involved in the protein synthesizing functions of that subunit. The protein is Large ribosomal subunit protein bL20 of Rhizobium meliloti (strain 1021) (Ensifer meliloti).